We begin with the raw amino-acid sequence, 751 residues long: Zinc finger protein 184 (751 aa).

The 72-residue stretch at 28-99 (VTFKDVIVDF…EPSIPVGTCA (72 aa)) folds into the KRAB domain. Phosphoserine occurs at positions 117, 122, and 199. The span at 191-202 (SNLVTQEPSPEE) shows a compositional bias: polar residues. The segment at 191-212 (SNLVTQEPSPEETSTKRSIKQN) is disordered. Lys206 is covalently cross-linked (Glycyl lysine isopeptide (Lys-Gly) (interchain with G-Cter in SUMO2)). 19 C2H2-type zinc fingers span residues 222–244 (CKCN…QRTH), 250–272 (YKCN…QRIH), 278–300 (YKCD…QRIH), 306–328 (YKCD…QRIH), 334–356 (YTCN…QKIH), 362–384 (FKCD…QKIH), 390–412 (YKCN…HMIH), 418–440 (YECN…QKTH), 446–468 (YDCA…LKIH), 474–496 (YKCN…RRIH), 502–524 (FECS…QKTH), 530–552 (YECK…ERIH), 558–580 (YQCH…RKIH), 586–608 (YKCN…KRIH), 614–636 (YECA…QKTH), 642–664 (YQCN…QRIH), 670–692 (YKCN…QNTH), 698–720 (YNCN…QRIH), and 726–748 (FGCN…QRLH).

The protein belongs to the krueppel C2H2-type zinc-finger protein family. Predominant expression in testis.

Its subcellular location is the nucleus. May be involved in transcriptional regulation. In Homo sapiens (Human), this protein is Zinc finger protein 184 (ZNF184).